A 536-amino-acid polypeptide reads, in one-letter code: Multicopper oxidase CueO (536 aa).

The segment at residues 1 to 28 is a signal peptide (tat-type signal); it reads MLRRDFLKYSVALGVASALPLWSRAAFA. Plastocyanin-like domains lie at 53–165, 229–295, and 424–536; these read KAGQ…IEDD, GWLR…AFDL, and FHNA…GFTV. Residues His101, His103, His141, and His143 each coordinate Cu cation. Cu cation contacts are provided by His463, His466, His468, His519, Cys520, His521, and His525.

This sequence belongs to the multicopper oxidase family. As to quaternary structure, monomer. It depends on Cu cation as a cofactor. Predicted to be exported by the Tat system. The position of the signal peptide cleavage has not been experimentally proven.

The protein localises to the periplasm. It carries out the reaction 4 Cu(+) + O2 + 4 H(+) = 4 Cu(2+) + 2 H2O. Its function is as follows. Multicopper oxidase involved in copper homeostasis and copper tolerance under both aerobic and anaerobic conditions. Is responsible for the oxidation of Cu(+) to the less harmful Cu(2+) in the periplasm, thereby preventing Cu(+) from entering the cytoplasm. The sequence is that of Multicopper oxidase CueO (cueO) from Salmonella typhimurium (strain LT2 / SGSC1412 / ATCC 700720).